The following is a 432-amino-acid chain: 3-phosphoshikimate 1-carboxyvinyltransferase (432 aa).

3-phosphoshikimate contacts are provided by lysine 23, serine 24, and arginine 28. Lysine 23 serves as a coordination point for phosphoenolpyruvate. Residues glycine 95 and arginine 123 each contribute to the phosphoenolpyruvate site. Residues serine 166, glutamine 168, aspartate 315, and lysine 342 each coordinate 3-phosphoshikimate. Glutamine 168 is a phosphoenolpyruvate binding site. Aspartate 315 serves as the catalytic Proton acceptor. The phosphoenolpyruvate site is built by arginine 346 and arginine 390.

It belongs to the EPSP synthase family. In terms of assembly, monomer.

Its subcellular location is the cytoplasm. The enzyme catalyses 3-phosphoshikimate + phosphoenolpyruvate = 5-O-(1-carboxyvinyl)-3-phosphoshikimate + phosphate. The protein operates within metabolic intermediate biosynthesis; chorismate biosynthesis; chorismate from D-erythrose 4-phosphate and phosphoenolpyruvate: step 6/7. Its function is as follows. Catalyzes the transfer of the enolpyruvyl moiety of phosphoenolpyruvate (PEP) to the 5-hydroxyl of shikimate-3-phosphate (S3P) to produce enolpyruvyl shikimate-3-phosphate and inorganic phosphate. This chain is 3-phosphoshikimate 1-carboxyvinyltransferase, found in Lactiplantibacillus plantarum (strain ATCC BAA-793 / NCIMB 8826 / WCFS1) (Lactobacillus plantarum).